The sequence spans 140 residues: Ribonuclease P protein component (140 aa).

Belongs to the RnpA family. As to quaternary structure, consists of a catalytic RNA component (M1 or rnpB) and a protein subunit.

The catalysed reaction is Endonucleolytic cleavage of RNA, removing 5'-extranucleotides from tRNA precursor.. RNaseP catalyzes the removal of the 5'-leader sequence from pre-tRNA to produce the mature 5'-terminus. It can also cleave other RNA substrates such as 4.5S RNA. The protein component plays an auxiliary but essential role in vivo by binding to the 5'-leader sequence and broadening the substrate specificity of the ribozyme. The chain is Ribonuclease P protein component from Nostoc punctiforme (strain ATCC 29133 / PCC 73102).